The sequence spans 206 residues: Holliday junction branch migration complex subunit RuvA (206 aa).

The domain I stretch occupies residues 1–63 (MIASLRGTVI…EDAMKLYGFI (63 aa)). Residues 64-142 (DNESREMFSV…AFAAGVVDEG (79 aa)) form a domain II region. A flexible linker region spans residues 143–153 (GEQISLPNANI). Positions 154–206 (ASEVVVEQVSQALVGLGFSEKQSDDAVSFVLAADPSLDTSGALRAALAKLSGK) are domain III.

This sequence belongs to the RuvA family. As to quaternary structure, homotetramer. Forms an RuvA(8)-RuvB(12)-Holliday junction (HJ) complex. HJ DNA is sandwiched between 2 RuvA tetramers; dsDNA enters through RuvA and exits via RuvB. An RuvB hexamer assembles on each DNA strand where it exits the tetramer. Each RuvB hexamer is contacted by two RuvA subunits (via domain III) on 2 adjacent RuvB subunits; this complex drives branch migration. In the full resolvosome a probable DNA-RuvA(4)-RuvB(12)-RuvC(2) complex forms which resolves the HJ.

It is found in the cytoplasm. In terms of biological role, the RuvA-RuvB-RuvC complex processes Holliday junction (HJ) DNA during genetic recombination and DNA repair, while the RuvA-RuvB complex plays an important role in the rescue of blocked DNA replication forks via replication fork reversal (RFR). RuvA specifically binds to HJ cruciform DNA, conferring on it an open structure. The RuvB hexamer acts as an ATP-dependent pump, pulling dsDNA into and through the RuvAB complex. HJ branch migration allows RuvC to scan DNA until it finds its consensus sequence, where it cleaves and resolves the cruciform DNA. This Corynebacterium glutamicum (strain ATCC 13032 / DSM 20300 / JCM 1318 / BCRC 11384 / CCUG 27702 / LMG 3730 / NBRC 12168 / NCIMB 10025 / NRRL B-2784 / 534) protein is Holliday junction branch migration complex subunit RuvA.